A 288-amino-acid polypeptide reads, in one-letter code: DegV domain-containing protein SAS0714 (288 aa).

The DegV domain occupies 3-282 (IAVMTDSTSY…SGGLGLGYVG (280 aa)). Residues Thr62 and Ser95 each coordinate hexadecanoate.

Its function is as follows. May bind long-chain fatty acids, such as palmitate, and may play a role in lipid transport or fatty acid metabolism. This chain is DegV domain-containing protein SAS0714, found in Staphylococcus aureus (strain MSSA476).